A 292-amino-acid polypeptide reads, in one-letter code: Elongation factor Ts (292 aa).

The interval 82 to 85 (TDFV) is involved in Mg(2+) ion dislocation from EF-Tu.

Belongs to the EF-Ts family.

The protein resides in the cytoplasm. In terms of biological role, associates with the EF-Tu.GDP complex and induces the exchange of GDP to GTP. It remains bound to the aminoacyl-tRNA.EF-Tu.GTP complex up to the GTP hydrolysis stage on the ribosome. This Bordetella petrii (strain ATCC BAA-461 / DSM 12804 / CCUG 43448) protein is Elongation factor Ts.